Reading from the N-terminus, the 499-residue chain is DNA-directed RNA polymerase subunit Rpo2N (499 aa).

It belongs to the RNA polymerase beta chain family. In terms of assembly, part of the RNA polymerase complex.

The protein resides in the cytoplasm. It catalyses the reaction RNA(n) + a ribonucleoside 5'-triphosphate = RNA(n+1) + diphosphate. DNA-dependent RNA polymerase (RNAP) catalyzes the transcription of DNA into RNA using the four ribonucleoside triphosphates as substrates. The Rpo2 subunit (Rpo2N and Rpo2C in this organism) is implicated in DNA promoter recognition and in nucleotide binding. This Methanococcus vannielii (strain ATCC 35089 / DSM 1224 / JCM 13029 / OCM 148 / SB) protein is DNA-directed RNA polymerase subunit Rpo2N.